Consider the following 454-residue polypeptide: Ribosomal protein uS12 methylthiotransferase RimO (454 aa).

The 112-residue stretch at 14–125 (SKVAFSHVGC…IAKVLDRVEQ (112 aa)) folds into the MTTase N-terminal domain. [4Fe-4S] cluster-binding residues include Cys-23, Cys-59, Cys-88, Cys-163, Cys-167, and Cys-170. The region spanning 149–378 (DKNKFVAYLR…ISVQQNISKD (230 aa)) is the Radical SAM core domain. The TRAM domain maps to 381–452 (QTYVGSKMKI…EYDLYGEIIK (72 aa)).

It belongs to the methylthiotransferase family. RimO subfamily. [4Fe-4S] cluster serves as cofactor.

It localises to the cytoplasm. It catalyses the reaction L-aspartate(89)-[ribosomal protein uS12]-hydrogen + (sulfur carrier)-SH + AH2 + 2 S-adenosyl-L-methionine = 3-methylsulfanyl-L-aspartate(89)-[ribosomal protein uS12]-hydrogen + (sulfur carrier)-H + 5'-deoxyadenosine + L-methionine + A + S-adenosyl-L-homocysteine + 2 H(+). Its function is as follows. Catalyzes the methylthiolation of an aspartic acid residue of ribosomal protein uS12. This Prochlorococcus marinus (strain AS9601) protein is Ribosomal protein uS12 methylthiotransferase RimO.